The primary structure comprises 333 residues: PDZ domain-containing protein GIPC1 (333 aa).

Positions 1 to 11 (MPLGLGRRKKA) are enriched in basic residues. Residues 1–55 (MPLGLGRRKKAPPLVENEEAEPSRSGLGVGEPGPLGGSGAGESQMGLPPPPASLR) form a disordered region. A compositionally biased stretch (gly residues) spans 27 to 40 (LGVGEPGPLGGSGA). At Ser68 the chain carries Phosphoserine. In terms of domain architecture, PDZ spans 133–213 (EVEVFKSEDA…GRTFTLKLTE (81 aa)). The interval 221 to 244 (ISQRSSGGHPGSGPQLGTGRGTLR) is disordered. Phosphoserine is present on residues Ser222, Ser225, and Ser232. Over residues 228-240 (GHPGSGPQLGTGR) the composition is skewed to gly residues. At Thr242 the chain carries Phosphothreonine. Residue Ser247 is modified to Phosphoserine.

Belongs to the GIPC family. Interacts with SDC4/syndecan-4 and SEMA4C/semaphorin-4C. Interacts with RGS19 (C-terminus), GLUT1 (C-terminus), ACTN1, KIF1B, MYO6 and PLEKHG5. In terms of tissue distribution, widely expressed.

Its subcellular location is the cytoplasm. The protein resides in the membrane. Functionally, may be involved in G protein-linked signaling. The sequence is that of PDZ domain-containing protein GIPC1 (Gipc1) from Rattus norvegicus (Rat).